The primary structure comprises 131 residues: Conotoxin Cal8.2 (131 aa).

A signal peptide spans 1-19; the sequence is MKLLLTLLLGSALMCITLA. A propeptide spanning residues 20-38 is cleaved from the precursor; it reads DECGLGTHRPVKEVIDNVR.

Contains 4 disulfide bonds. Expressed by the venom duct.

The protein resides in the secreted. Probable neurotoxin with unknown target. Possibly targets ion channels. The sequence is that of Conotoxin Cal8.2 from Californiconus californicus (California cone).